Consider the following 359-residue polypeptide: DNA polymerase IV (359 aa).

Residues 4–185 (IIHIDMDCYF…LSLRKIPGVG (182 aa)) enclose the UmuC domain. 2 residues coordinate Mg(2+): Asp8 and Asp103. Glu104 is an active-site residue.

This sequence belongs to the DNA polymerase type-Y family. As to quaternary structure, monomer. The cofactor is Mg(2+).

It localises to the cytoplasm. The catalysed reaction is DNA(n) + a 2'-deoxyribonucleoside 5'-triphosphate = DNA(n+1) + diphosphate. In terms of biological role, poorly processive, error-prone DNA polymerase involved in untargeted mutagenesis. Copies undamaged DNA at stalled replication forks, which arise in vivo from mismatched or misaligned primer ends. These misaligned primers can be extended by PolIV. Exhibits no 3'-5' exonuclease (proofreading) activity. May be involved in translesional synthesis, in conjunction with the beta clamp from PolIII. This chain is DNA polymerase IV, found in Shewanella sp. (strain MR-7).